Reading from the N-terminus, the 310-residue chain is p-hydroxybenzoic acid efflux pump subunit AaeA (310 aa).

The chain crosses the membrane as a helical span at residues 12–32; sequence AITVALVILAFIAISRAWVFY.

Belongs to the membrane fusion protein (MFP) (TC 8.A.1) family.

The protein resides in the cell inner membrane. Functionally, forms an efflux pump with AaeB. This Enterobacter sp. (strain 638) protein is p-hydroxybenzoic acid efflux pump subunit AaeA.